Here is a 219-residue protein sequence, read N- to C-terminus: MAYFISFEGIEGCGKTTQLKLAAQYLRTLKIPVGTTEEPGGTPLGKKIRNILLNRGPFEICAEAETLLFVAARAQHVREVILPSLARGQWILCDRFSDATAVYQGCVRGIDEAWIRQLDSFATSFLKPNLTLLFDLPAETGLHRAMQRMTGIPENSREDRFEQEGLNFHEKIREGYLALARQESERFRIINAAADIPSIHREVCRHLDVLRQQPEAGLP.

9–16 (GIEGCGKT) provides a ligand contact to ATP.

Belongs to the thymidylate kinase family.

It catalyses the reaction dTMP + ATP = dTDP + ADP. Phosphorylation of dTMP to form dTDP in both de novo and salvage pathways of dTTP synthesis. The chain is Thymidylate kinase from Syntrophus aciditrophicus (strain SB).